Here is a 176-residue protein sequence, read N- to C-terminus: Magnesium-dependent phosphatase 1 (176 aa).

Aspartate 11 acts as the Nucleophile in catalysis. A Mg(2+)-binding site is contributed by aspartate 11. Positions 12 and 13 each coordinate phosphate. Position 13 (aspartate 13) interacts with Mg(2+). The active-site Proton donor is aspartate 13. Tryptophan 20 serves as a coordination point for substrate. Phosphate is bound by residues serine 69, arginine 70, and lysine 100. Substrate is bound at residue arginine 70. Aspartate 123 serves as a coordination point for Mg(2+).

This sequence belongs to the HAD-like hydrolase superfamily. Mg(2+) serves as cofactor.

The catalysed reaction is O-phospho-L-tyrosyl-[protein] + H2O = L-tyrosyl-[protein] + phosphate. Inhibited by vanadate and zinc, and slightly by calcium. Its function is as follows. Magnesium-dependent phosphatase which may act as a tyrosine phosphatase. In Homo sapiens (Human), this protein is Magnesium-dependent phosphatase 1 (MDP1).